The primary structure comprises 438 residues: Putative metabolite transport protein HI_0281 (438 aa).

The Cytoplasmic portion of the chain corresponds to 1–17; it reads MSTQLRNNPMKVALASM. Residues 18-38 traverse the membrane as a helical segment; that stretch reads VGTAIEFFDYYIYAAAAVLVF. Topologically, residues 39-52 are periplasmic; that stretch reads NTQFFHSDDPLSND. Residues 53 to 73 form a helical membrane-spanning segment; the sequence is LLSLSTLALAFFARPIGSALF. Over 74–85 the chain is Cytoplasmic; it reads GHFGDKIGRKKT. A helical membrane pass occupies residues 86–106; sequence LVASLVLMGGSTVVIGLLPNY. The Periplasmic portion of the chain corresponds to 107–115; it reads AQIGIWAPI. Residues 116 to 136 traverse the membrane as a helical segment; the sequence is LLCVCRVGQGIGLGGEWGGAA. The Cytoplasmic portion of the chain corresponds to 137-156; sequence LVATENAPEGKRAWYGTFPQ. A helical transmembrane segment spans residues 157–177; it reads LGAPIGLFVANGTFFLVSYLL. Residues 178–181 lie on the Periplasmic side of the membrane; the sequence is GHNA. The chain crosses the membrane as a helical span at residues 182–202; it reads LVEWAWRIPFVSSILLVAVGL. Topologically, residues 203–239 are cytoplasmic; that stretch reads YVRLTLHESHVFVEAEQKGKKLNAPVSVVFTKHLKPM. The chain crosses the membrane as a helical span at residues 240–260; that stretch reads VIGTFIMVATYSLFYIMTAFA. Residues 261 to 286 are Periplasmic-facing; sequence QAYSRTAPKLSEAGYALGLGIPANTF. The helical transmembrane segment at 287-307 threads the bilayer; that stretch reads TGLLLISAIVFGIFISISGFY. The Cytoplasmic segment spans residues 308 to 314; the sequence is ADKIGRR. A helical membrane pass occupies residues 315-336; the sequence is KWLIWVTIAIGVLGLAMPLFLE. Residues 337 to 342 lie on the Periplasmic side of the membrane; sequence NGTPVS. Residues 343–363 form a helical membrane-spanning segment; that stretch reads VFAFLVIGMAIMGMTFGPMAA. Residues 364-377 are Cytoplasmic-facing; that stretch reads LLPELFPTEVRYSG. Residues 378 to 398 traverse the membrane as a helical segment; that stretch reads ASLAYNLASIIGATIAAMISL. At 399–405 the chain is on the periplasmic side; sequence KINASFG. A helical transmembrane segment spans residues 406–426; it reads VMGVGIYLAINALMTFLALLA. Residues 427–438 lie on the Cytoplasmic side of the membrane; that stretch reads SKETKNVDLTEI.

The protein belongs to the major facilitator superfamily. Sugar transporter (TC 2.A.1.1) family.

It is found in the cell inner membrane. This chain is Putative metabolite transport protein HI_0281, found in Haemophilus influenzae (strain ATCC 51907 / DSM 11121 / KW20 / Rd).